A 285-amino-acid polypeptide reads, in one-letter code: Nucleotide-binding protein Gmet_1286 (285 aa).

8–15 (GLSGSGKS) is a binding site for ATP. Position 59 to 62 (59 to 62 (DIRG)) interacts with GTP.

Belongs to the RapZ-like family.

In terms of biological role, displays ATPase and GTPase activities. The protein is Nucleotide-binding protein Gmet_1286 of Geobacter metallireducens (strain ATCC 53774 / DSM 7210 / GS-15).